Reading from the N-terminus, the 1794-residue chain is Protein TIC 214 (1794 aa).

Helical transmembrane passes span 19–39 (IINS…FSIG), 68–88 (FIAG…HLAL), 91–111 (PHTI…WNNH), 133–153 (VFLN…SSML), 176–196 (VGWL…LVWI), and 227–247 (IFSI…PSPI).

It belongs to the TIC214 family. As to quaternary structure, part of the Tic complex.

The protein resides in the plastid. It localises to the chloroplast inner membrane. Functionally, involved in protein precursor import into chloroplasts. May be part of an intermediate translocation complex acting as a protein-conducting channel at the inner envelope. This Olimarabidopsis pumila (Dwarf rocket) protein is Protein TIC 214.